A 410-amino-acid chain; its full sequence is Peptidase T (410 aa).

H79 lines the Zn(2+) pocket. The active site involves D81. D142 provides a ligand contact to Zn(2+). E176 (proton acceptor) is an active-site residue. The Zn(2+) site is built by E177, D199, and H381.

Belongs to the peptidase M20B family. Requires Zn(2+) as cofactor.

The protein localises to the cytoplasm. It carries out the reaction Release of the N-terminal residue from a tripeptide.. Functionally, cleaves the N-terminal amino acid of tripeptides. In Listeria innocua serovar 6a (strain ATCC BAA-680 / CLIP 11262), this protein is Peptidase T.